A 464-amino-acid polypeptide reads, in one-letter code: Aspartyl protease AED1 (464 aa).

The signal sequence occupies residues 1–25; that stretch reads MSIMRNFLSMIIMLCVCLNWCFAEG. Positions 132–460 constitute a Peptidase A1 domain; that stretch reads YIVTIGIGTP…DVAGGRVGFA (329 aa). Catalysis depends on residues aspartate 150 and aspartate 345. Cysteine 384 and cysteine 425 are oxidised to a cystine.

Belongs to the peptidase A1 family.

Its subcellular location is the secreted. The protein resides in the extracellular space. The protein localises to the apoplast. Its function is as follows. Aspartyl protease involved in a homeostatic feedback mechanism regulating systemic immunity. Has only mild or no influence on local defenses. Acts downstream of salicylic acid to suppress systemic immunity. This is Aspartyl protease AED1 from Arabidopsis thaliana (Mouse-ear cress).